Consider the following 353-residue polypeptide: Phospho-N-acetylmuramoyl-pentapeptide-transferase (353 aa).

Helical transmembrane passes span 22–42 (FAFFIALCLSLFLMPKFITWA), 65–85 (TPTMGGLIFISSAVIASLSCI), 88–108 (DNIFAISALLCLILFCLIGLI), 129–149 (LLTQIIAGLICILPLYFSSEL), 161–181 (PLFDMEIFAIAFWILVLISSS), 192–212 (GLATVPSIFSLSTLGIFLYLS), 228–248 (GLGEVVIICAALIGALMGFLW), 256–276 (VFMGDSGSLALGGFIGFLAII), 281–301 (ILLLLIGFVFVLETVSVILQV), and 330–350 (KIIVRFWMIALLSNLLALASI).

It belongs to the glycosyltransferase 4 family. MraY subfamily. The cofactor is Mg(2+).

Its subcellular location is the cell inner membrane. The catalysed reaction is UDP-N-acetyl-alpha-D-muramoyl-L-alanyl-gamma-D-glutamyl-meso-2,6-diaminopimeloyl-D-alanyl-D-alanine + di-trans,octa-cis-undecaprenyl phosphate = di-trans,octa-cis-undecaprenyl diphospho-N-acetyl-alpha-D-muramoyl-L-alanyl-D-glutamyl-meso-2,6-diaminopimeloyl-D-alanyl-D-alanine + UMP. It functions in the pathway cell wall biogenesis; peptidoglycan biosynthesis. Its function is as follows. Catalyzes the initial step of the lipid cycle reactions in the biosynthesis of the cell wall peptidoglycan: transfers peptidoglycan precursor phospho-MurNAc-pentapeptide from UDP-MurNAc-pentapeptide onto the lipid carrier undecaprenyl phosphate, yielding undecaprenyl-pyrophosphoryl-MurNAc-pentapeptide, known as lipid I. The protein is Phospho-N-acetylmuramoyl-pentapeptide-transferase of Campylobacter jejuni subsp. jejuni serotype O:23/36 (strain 81-176).